The primary structure comprises 278 residues: Large ribosomal subunit protein uL2 (278 aa).

Disordered regions lie at residues 1 to 59 (MAIR…GGHK) and 222 to 278 (RGAA…NKKR). Residues 16 to 27 (SSVSEFSEITRS) are compositionally biased toward polar residues. Composition is skewed to basic residues over residues 45-59 (VHGHITTRHKGGGHK) and 269-278 (VRRRRPNKKR).

The protein belongs to the universal ribosomal protein uL2 family. In terms of assembly, part of the 50S ribosomal subunit. Forms a bridge to the 30S subunit in the 70S ribosome.

Its function is as follows. One of the primary rRNA binding proteins. Required for association of the 30S and 50S subunits to form the 70S ribosome, for tRNA binding and peptide bond formation. It has been suggested to have peptidyltransferase activity; this is somewhat controversial. Makes several contacts with the 16S rRNA in the 70S ribosome. This is Large ribosomal subunit protein uL2 from Corynebacterium urealyticum (strain ATCC 43042 / DSM 7109).